The primary structure comprises 629 residues: Arginyl-tRNA--protein transferase 1 (629 aa).

2 disordered regions span residues 274 to 298 and 353 to 405; these read QNNS…TNEP and PDES…ITKE. Over residues 282–295 the composition is skewed to low complexity; the sequence is TTTATTATTTTTTT. Over residues 356–396 the composition is skewed to acidic residues; that stretch reads SYDDYVYDGKDDDDDDDDKDEKEDDEDEDQEDDEDEDDGNN.

It belongs to the R-transferase family.

It catalyses the reaction an N-terminal L-alpha-aminoacyl-[protein] + L-arginyl-tRNA(Arg) = an N-terminal L-arginyl-L-aminoacyl-[protein] + tRNA(Arg) + H(+). Involved in the post-translational conjugation of arginine to the N-terminal aspartate or glutamate of a protein. This arginylation is required for degradation of the protein via the ubiquitin pathway. Does not arginylate cysteine residues. In Dictyostelium discoideum (Social amoeba), this protein is Arginyl-tRNA--protein transferase 1 (ate1).